The primary structure comprises 539 residues: F-box/WD-40 repeat-containing protein At5g21040 (539 aa).

Residues 65–111 (STTIIDLPQALISEILNCLDPKELGLVSCVSTYLHRLASEHHAWKEF) enclose the F-box domain. 7 WD repeats span residues 160-199 (GHTEAVRTVFLLASAKLVFTSGYDSIVRMWDMEEGLSIAA), 201-239 (KPLGCTIRALAADTKLLVAGGTDGFIHCWKSLDGLRNLF), 255-292 (GHEGPITSLALDMTSIFSGSWDMSVRIWDRSSMKCVKT), 294-330 (RHSDWVWGLAPHETTLASTSGSDVYIWDVSSETPLAI), 334-373 (AHEGTTYSLARSHTGDFLFTGGEDGGIKMFEIRRYGSETS), 382-419 (PHTSPVYSLSFEFPWLVSASGDGKLALIDVRKLLKTNR), and 433-477 (PPQR…EIER). Residues 505–539 (GRPDQCSIAAHKNPINGERNRAWHSKRRASGKAKA) form a disordered region. Residues 526-539 (AWHSKRRASGKAKA) show a composition bias toward basic residues.

The protein is F-box/WD-40 repeat-containing protein At5g21040 of Arabidopsis thaliana (Mouse-ear cress).